A 231-amino-acid polypeptide reads, in one-letter code: Beta-casein (231 aa).

The first 15 residues, 1–15, serve as a signal peptide directing secretion; sequence MKVFILACLVALALA. The residue at position 24 (serine 24) is a Phosphoserine. Threonine 27 is subject to Phosphothreonine. Serine 29, serine 31, and serine 32 each carry phosphoserine.

The protein belongs to the beta-casein family. As to expression, mammary gland specific. Secreted in milk.

It localises to the secreted. In terms of biological role, important role in determination of the surface properties of the casein micelles. In Rattus norvegicus (Rat), this protein is Beta-casein (Csn2).